Reading from the N-terminus, the 125-residue chain is Subtelomeric hrmA-associated cluster protein cgnA (125 aa).

G-Q-I/R/S repeat units lie at residues 11 to 13 (GQI), 14 to 16 (GPI), 17 to 19 (GQR), 20 to 22 (GQS), 23 to 25 (GQR), 26 to 28 (GQS), 29 to 31 (GQR), 32 to 34 (GQS), 35 to 37 (GQI), 38 to 40 (GQS), 41 to 43 (GQS), 44 to 46 (GQS), 47 to 49 (GQS), 50 to 52 (GQS), 53 to 55 (GQI), 56 to 58 (GQI), 59 to 61 (GQI), 62 to 64 (GQI), 65 to 67 (GQI), 68 to 70 (GQI), 71 to 73 (GQI), 74 to 76 (GQI), and 77 to 79 (GQA). A 23 X 3 AA approximate tandem repeats of G-Q-I/R/S region spans residues 11–79 (GQIGPIGQRG…IGQIGQIGQA (69 aa)). The interval 15–57 (PIGQRGQSGQRGQSGQRGQSGQIGQSGQSGQSGQSGQSGQIGQ) is disordered.

The protein resides in the secreted. In terms of biological role, hypoxia responsive morphology factor that modulates the expression of the subtelomeric hrmA-associated cluster (HAC) containing genes that alter the hyphal surface (such as reduced total chitin or increased beta-glucan exposure) and perturb inter-hyphal interactions within the developing biofilms, resulting in a loss of vertically aligned polarized growing filaments. Consequently, this hypoxia-typic morphotype (called H-MORPH) with altered biofilm architecture leads to increased hypoxia fitness, increased host inflammation, rapid disease progression, and mortality in a murine model of invasive aspergillosis. GcnA is directly involved in the reduction total surface chitin and the increase beta-glucan exposure, and mediates the detachment of the extracellular matrix and especially of its component galactosaminogalactan (GAG). The sequence is that of Subtelomeric hrmA-associated cluster protein cgnA from Aspergillus fumigatus (strain CBS 144.89 / FGSC A1163 / CEA10) (Neosartorya fumigata).